The following is a 299-amino-acid chain: HTH-type transcriptional repressor CarH (299 aa).

Positions T5–Q74 constitute an HTH merR-type domain. The H-T-H motif DNA-binding region spans I8–R27. In terms of domain architecture, B12-binding spans H180–T299.

This sequence belongs to the CarA/CarH B12-binding photoregulator family. As to quaternary structure, forms oligomers. Interacts with CarS.

Requires cobalamin (vitamin B12) for repressor activity. In the dark, binding of cobalamin to CarH induces its oligomerization, which enhances binding to the DNA and repressor activity. Light causes cobalamin photolysis and disruption of the cobalamin-CarH complex, which decreases interaction with DNA and allows transcription of the carB operon. Interaction with CarS also prevents binding to DNA. Negative regulator of the carB operon in the dark. Binds specifically to the CarA operator, in the region around the carB promoter, which blocks access to the RNA polymerase. In Myxococcus xanthus, this protein is HTH-type transcriptional repressor CarH (carH).